The primary structure comprises 86 residues: Small ribosomal subunit protein uS15 (86 aa).

Belongs to the universal ribosomal protein uS15 family. In terms of assembly, part of the 30S ribosomal subunit. Forms a bridge to the 50S subunit in the 70S ribosome, contacting the 23S rRNA.

Functionally, one of the primary rRNA binding proteins, it binds directly to 16S rRNA where it helps nucleate assembly of the platform of the 30S subunit by binding and bridging several RNA helices of the 16S rRNA. In terms of biological role, forms an intersubunit bridge (bridge B4) with the 23S rRNA of the 50S subunit in the ribosome. This chain is Small ribosomal subunit protein uS15, found in Ruthia magnifica subsp. Calyptogena magnifica.